The following is a 75-amino-acid chain: MQFLERHFSVLFPVLFFFSFYPISFAPNFDWSTYVSLHYPLTLPNHLALMSSYTHQSHCGTSVFHQAQTLVHLHT.

The signal sequence occupies residues 1–26 (MQFLERHFSVLFPVLFFFSFYPISFA).

The protein localises to the secreted. This is an uncharacterized protein from Schizosaccharomyces pombe (strain 972 / ATCC 24843) (Fission yeast).